A 132-amino-acid chain; its full sequence is DNA-directed RNA polymerase subunit omega (132 aa).

The disordered stretch occupies residues 90 to 109 (SSEAGGVLGTSSEEEGSSFD).

Belongs to the RNA polymerase subunit omega family. In terms of assembly, the RNAP catalytic core consists of 2 alpha, 1 beta, 1 beta' and 1 omega subunit. When a sigma factor is associated with the core the holoenzyme is formed, which can initiate transcription.

It carries out the reaction RNA(n) + a ribonucleoside 5'-triphosphate = RNA(n+1) + diphosphate. In terms of biological role, promotes RNA polymerase assembly. Latches the N- and C-terminal regions of the beta' subunit thereby facilitating its interaction with the beta and alpha subunits. The protein is DNA-directed RNA polymerase subunit omega of Bartonella henselae (strain ATCC 49882 / DSM 28221 / CCUG 30454 / Houston 1) (Rochalimaea henselae).